We begin with the raw amino-acid sequence, 611 residues long: Chaperone protein DnaK (611 aa).

Threonine 173 is subject to Phosphothreonine; by autocatalysis. Residues 579-592 (AAGQAEGAQGAQDA) show a composition bias toward low complexity. The segment at 579–598 (AAGQAEGAQGAQDAGAKKDN) is disordered.

The protein belongs to the heat shock protein 70 family.

In terms of biological role, acts as a chaperone. This is Chaperone protein DnaK from Bacillus cereus (strain ATCC 10987 / NRS 248).